The primary structure comprises 107 residues: Cytochrome c-550 (107 aa).

Positions 11, 14, 15, and 80 each coordinate heme c.

Post-translationally, binds 1 heme c group covalently per subunit.

This chain is Cytochrome c-550, found in Ancylobacter novellus (Thiobacillus novellus).